Reading from the N-terminus, the 919-residue chain is Probable dipeptidyl-aminopeptidase B (919 aa).

Residues 1–10 (MRPSDDHGET) are compositionally biased toward basic and acidic residues. The disordered stretch occupies residues 1–50 (MRPSDDHGETSEFLPITRSRSVSAASQTSTDSSLSTESLFPGEQKPFPNV). The Cytoplasmic portion of the chain corresponds to 1–92 (MRPSDDHGET…AATGGGRARR (92 aa)). Low complexity predominate over residues 21-38 (SVSAASQTSTDSSLSTES). The chain crosses the membrane as a helical; Signal-anchor for type II membrane protein span at residues 93 to 113 (IFWILVLLCLGGWLLAFALFL). Over 114 to 919 (TGGRANYQTA…MKRSLPLLYP (806 aa)) the chain is Vacuolar. Residues Asn200, Asn352, and Asn643 are each glycosylated (N-linked (GlcNAc...) asparagine). Ser757 serves as the catalytic Charge relay system. N-linked (GlcNAc...) asparagine glycosylation is present at Asn811. Residues Asp834 and His867 each act as charge relay system in the active site.

The protein belongs to the peptidase S9B family.

It is found in the vacuole membrane. It carries out the reaction Release of an N-terminal dipeptide, Xaa-Yaa-|-Zaa-, from a polypeptide, preferentially when Yaa is Pro, provided Zaa is neither Pro nor hydroxyproline.. Functionally, type IV dipeptidyl-peptidase which removes N-terminal dipeptides sequentially from polypeptides having unsubstituted N-termini provided that the penultimate residue is proline. This Neosartorya fischeri (strain ATCC 1020 / DSM 3700 / CBS 544.65 / FGSC A1164 / JCM 1740 / NRRL 181 / WB 181) (Aspergillus fischerianus) protein is Probable dipeptidyl-aminopeptidase B (dapB).